Reading from the N-terminus, the 169-residue chain is Lutropin/choriogonadotropin subunit beta (169 aa).

The first 20 residues, 1-20, serve as a signal peptide directing secretion; that stretch reads MEMLQGLLLWMLLSVGGVWA. 6 cysteine pairs are disulfide-bonded: Cys-29–Cys-77, Cys-43–Cys-92, Cys-46–Cys-130, Cys-54–Cys-108, Cys-58–Cys-110, and Cys-113–Cys-120. Residue Asn-33 is glycosylated (N-linked (GlcNAc...) asparagine). A disordered region spans residues 131-169; the sequence is APQTSSSCKDPPSQPLTSTSTPTPGASRRSSHPLPINTS. A compositionally biased stretch (low complexity) spans 145–158; it reads PLTSTSTPTPGASR.

This sequence belongs to the glycoprotein hormones subunit beta family. In terms of assembly, heterodimer of a common alpha chain and a unique beta chain which confers biological specificity to thyrotropin, lutropin, follitropin and gonadotropin.

It is found in the secreted. Promotes spermatogenesis and ovulation by stimulating the testes and ovaries to synthesize steroids. The polypeptide is Lutropin/choriogonadotropin subunit beta (LHB) (Equus asinus (Donkey)).